Reading from the N-terminus, the 544-residue chain is Chaperonin GroEL (544 aa).

Residues 29-32, K50, 86-90, G414, 477-479, and D493 contribute to the ATP site; these read TLGP, DGTTT, and DAA.

It belongs to the chaperonin (HSP60) family. In terms of assembly, forms a cylinder of 14 subunits composed of two heptameric rings stacked back-to-back. Interacts with the co-chaperonin GroES.

It localises to the cytoplasm. The catalysed reaction is ATP + H2O + a folded polypeptide = ADP + phosphate + an unfolded polypeptide.. In terms of biological role, together with its co-chaperonin GroES, plays an essential role in assisting protein folding. The GroEL-GroES system forms a nano-cage that allows encapsulation of the non-native substrate proteins and provides a physical environment optimized to promote and accelerate protein folding. The sequence is that of Chaperonin GroEL from Hydrogenovibrio crunogenus (strain DSM 25203 / XCL-2) (Thiomicrospira crunogena).